The chain runs to 96 residues: (4S)-4-hydroxy-5-phosphonooxypentane-2,3-dione isomerase (96 aa).

In terms of domain architecture, ABM spans 2-91 (HVTLVEINVH…MTGPRKKRLF (90 aa)).

This sequence belongs to the LsrG family. As to quaternary structure, homodimer.

Its subcellular location is the cytoplasm. The enzyme catalyses (2S)-2-hydroxy-3,4-dioxopentyl phosphate = 3-hydroxy-2,4-dioxopentyl phosphate. Its function is as follows. Involved in the degradation of phospho-AI-2, thereby terminating induction of the lsr operon and closing the AI-2 signaling cycle. Catalyzes the conversion of (4S)-4-hydroxy-5-phosphonooxypentane-2,3-dione (P-DPD) to 3-hydroxy-5-phosphonooxypentane-2,4-dione (P-HPD). The protein is (4S)-4-hydroxy-5-phosphonooxypentane-2,3-dione isomerase of Escherichia coli O9:H4 (strain HS).